The chain runs to 195 residues: Myelin-associated neurite-outgrowth inhibitor (195 aa).

Met1 is modified (N-acetylmethionine). Residues 1 to 18 (MNPVYSPGSSGVPYANAK) lie on the Cytoplasmic side of the membrane. Ser6 bears the Phosphoserine mark. A helical membrane pass occupies residues 19–42 (GIGYPAGFPMGYAAAAPAYSPNMY). Topologically, residues 43 to 142 (PGANPTFQTG…PAPIPPPRGN (100 aa)) are extracellular. Asn46 carries an N-linked (GlcNAc...) asparagine glycan. A helical membrane pass occupies residues 143–164 (GVTMGMVAGTTMAMSAGTLLTA). The Cytoplasmic portion of the chain corresponds to 165–195 (HSPTPVAPHPVTVPTYRAPGTPTYSYVPPQW).

The protein belongs to the FAM168 family. As to quaternary structure, may form homodimers. May interact with DAZAP2, FAM168A, PRDX6, RBM6, TMTC1 and YPEL2. Interacts with CDC27. Post-translationally, N-glycosylated. Expressed in the brain, within neuronal axonal fibers and associated with myelin sheets (at protein level). Expression tends to be lower in the brain of Alzheimer disease patients compared to healthy individuals (at protein level).

It localises to the cytoplasm. Its subcellular location is the perinuclear region. The protein resides in the cell membrane. The protein localises to the cell projection. It is found in the axon. Inhibitor of neuronal axonal outgrowth. Acts as a negative regulator of CDC42 and STAT3 and a positive regulator of STMN2. Positive regulator of CDC27. The polypeptide is Myelin-associated neurite-outgrowth inhibitor (FAM168B) (Homo sapiens (Human)).